We begin with the raw amino-acid sequence, 425 residues long: MEPNGYRKERRKEQHLGRMNGGGGDVETDLDPWTAWAYKPRTISLLLIGACFLIWASGALDPDSTTSDDLVTSVKRGVWAMIAVFLAYSLLQAPSTVLIRPHPAIWRLVHGMAVIYLVALTFLLFQRRDDARQFMKFLHPDLGIELPEKSYGADCRIYVPDHPTNRFKNLYDTVFDEFFLAHIFGWWGKAILIRNQPLLWVLSIGFELLEVTFRHMLPNFNECWWDSIVLDILICNWFGIWAGMYTVRYFDGKTYEWVGISRQPNIIGKVKRTLGQFTPAHWDKDEWHPLQGPWRFIQVLTLCIIFLTVELNTFFLKFSLWIPPRNPVILYRLILWWLIAIPTTREYNSYLQDRKPVKKVGAFCWLSLGICIVELLICIKFGSGLYPTEMPLWVVTLWGSVGLGLVAFLLSWTWKIQKILAQKRR.

Positions 1 to 16 (MEPNGYRKERRKEQHL) are enriched in basic and acidic residues. Residues 1-23 (MEPNGYRKERRKEQHLGRMNGGG) are disordered. Transmembrane regions (helical) follow at residues 42–62 (TISL…ALDP), 79–99 (WAMI…TVLI), 105–125 (IWRL…FLLF), 197–217 (PLLW…RHML), 227–247 (SIVL…MYTV), 296–316 (FIQV…TFFL), 321–341 (WIPP…LIAI), 361–381 (GAFC…CIKF), and 390–410 (MPLW…AFLL).

It belongs to the CDP-alcohol phosphatidyltransferase class-I family. In terms of tissue distribution, expressed in trichomes, leaf veins and root vasculature.

It is found in the endoplasmic reticulum membrane. It localises to the nucleus envelope. It carries out the reaction a CDP-1,2-diacyl-sn-glycerol + L-serine = a 1,2-diacyl-sn-glycero-3-phospho-L-serine + CMP + H(+). The protein operates within phospholipid metabolism; phosphatidylethanolamine biosynthesis; phosphatidylethanolamine from CDP-diacylglycerol: step 1/2. Catalyzes a base-exchange reaction in which the polar head group of phosphatidylethanolamine (PE) or phosphatidylcholine (PC) is replaced by L-serine. Is essential for phosphatidylserine (PS) biosynthesis and PE seems to be the most plausible substrate. Plays an important role in microspore maturation. This chain is CDP-diacylglycerol--serine O-phosphatidyltransferase 1 (PSS1), found in Arabidopsis thaliana (Mouse-ear cress).